The primary structure comprises 567 residues: MPKWAHLGLAALLLISTTQEGTADIDWWENASLYQIYPRSFQDSDGDGIGDLKGITSRLGYLKEIGITATWLSPIFTSPMSDFGYDISNFYDIDPIFGTLEDFDDLIVEAKSLGVKIILDFVPNHSSDENVWFEKSVNREDGYDDFYVWDDGKLNEETGARDPPSNWVSVFSGPMWTWNEKRQQYFLHQFQVKQPDLNFTNPMVREHMLDVLKFWLDRGVDGFRIDAVPHIYEHRNADGSYPDEPVSGWGSDPNAYDYHDHIYTKDQPATVDLMYEWREFLDNYRAQNGGDSRVLLAEAYSSVETLSAYFGNSTHQGTQLPMNFQLMYLSGYSTAKDVVGSIDYWMNTMWKEHQTANWVVGNHDTNRVADRMGAHKVDLLNVIVNALPGASVTYYGEEIGMSNVDVECTGDSCEDRDGERTPMQWTAGKNADFSDGESTWLPLSPEYQRYNVQTERGVSRSSLNIFKGLQELKSSSAFLAFKEDGGFSYEAVTEQVLQIIRTNKISEEYRILVNMGNGMEILDGLAPKTYEYVLATAYSTHYSGQKADLSQRIILMPYEAVVLRWLA.

The signal sequence occupies residues 1–23; that stretch reads MPKWAHLGLAALLLISTTQEGTA. N-linked (GlcNAc...) asparagine glycosylation is found at asparagine 30, asparagine 124, and asparagine 198. Aspartate 226 (nucleophile) is an active-site residue. Glutamate 298 functions as the Proton donor in the catalytic mechanism. An N-linked (GlcNAc...) asparagine glycan is attached at asparagine 312.

The protein belongs to the glycosyl hydrolase 13 family.

The catalysed reaction is Hydrolysis of terminal, non-reducing (1-&gt;4)-linked alpha-D-glucose residues with release of alpha-D-glucose.. The polypeptide is Maltase A2 (Mal-A2) (Drosophila melanogaster (Fruit fly)).